We begin with the raw amino-acid sequence, 146 residues long: Large ribosomal subunit protein uL15 (146 aa).

The interval 1 to 56 (MKLHELRAAEGANKASKRVGRGTGSGLGKTSGRGQNGQNSRSGGGVRPGFEGGQMP) is disordered. Composition is skewed to gly residues over residues 21–35 (RGTGSGLGKTSGRGQ) and 42–52 (SGGGVRPGFEG).

This sequence belongs to the universal ribosomal protein uL15 family. In terms of assembly, part of the 50S ribosomal subunit.

In terms of biological role, binds to the 23S rRNA. The polypeptide is Large ribosomal subunit protein uL15 (Clostridium botulinum (strain Okra / Type B1)).